The following is a 684-amino-acid chain: Soluble guanylate cyclase gcy-32 (684 aa).

Histidine 105 contributes to the heme binding site. Residues 396–432 (DVEVNLQLEANNEQLETMTRELELERQKTDSILKDML) are a coiled coil. One can recognise a Guanylate cyclase domain in the interval 454–582 (TVMFCDLPAF…ETVTLASQME (129 aa)). The Mg(2+) site is built by aspartate 459 and aspartate 503.

This sequence belongs to the adenylyl cyclase class-4/guanylyl cyclase family. As to quaternary structure, heterodimer; with other soluble guanylate cyclases. Heme is required as a cofactor. Expressed in a small number of neurons, corresponding to URX, AQR and PQR neurons.

The protein localises to the cytoplasm. The catalysed reaction is GTP = 3',5'-cyclic GMP + diphosphate. May be regulated by molecular oxygen. Probably not activated by nitric oxide (NO). Its function is as follows. Synthesizes cyclic GMP (cGMP) from GTP. Influences aerotaxis responses, aggregation and bordering behaviors (gathering around the edge of a bacterial lawn) in combination with other soluble guanylate cyclases. The sequence is that of Soluble guanylate cyclase gcy-32 (gcy-32) from Caenorhabditis elegans.